The following is a 242-amino-acid chain: MAGENSSTETKNQEINEKTPEVQTFETNVEFESSQKVESDTELSADNASIDTDIQSTESTSKEKDQVLLKEAYELLQTQLETTKYQLEEKESQYKRLGADFDNFRKRTQKEKEDLDTQVKCSTIMELLPVIDNFERARSHIKPANDGEMAIHKSYQSVYKQMVDSLKRLGVSVMRPEGQEFDPNLHEAVMREATAEHPEGTVIEELVRGYILGERVLRHAMVKVATAPDTDAETENQTDPES.

Positions 1–10 are enriched in polar residues; that stretch reads MAGENSSTET. Residues 1-64 are disordered; the sequence is MAGENSSTET…QSTESTSKEK (64 aa). Residues 11 to 20 show a composition bias toward basic and acidic residues; it reads KNQEINEKTP. Polar residues-rich tracts occupy residues 21 to 32 and 40 to 59; these read EVQTFETNVEFE and DTELSADNASIDTDIQSTES.

This sequence belongs to the GrpE family. As to quaternary structure, homodimer.

The protein localises to the cytoplasm. Functionally, participates actively in the response to hyperosmotic and heat shock by preventing the aggregation of stress-denatured proteins, in association with DnaK and GrpE. It is the nucleotide exchange factor for DnaK and may function as a thermosensor. Unfolded proteins bind initially to DnaJ; upon interaction with the DnaJ-bound protein, DnaK hydrolyzes its bound ATP, resulting in the formation of a stable complex. GrpE releases ADP from DnaK; ATP binding to DnaK triggers the release of the substrate protein, thus completing the reaction cycle. Several rounds of ATP-dependent interactions between DnaJ, DnaK and GrpE are required for fully efficient folding. The polypeptide is Protein GrpE (Trichodesmium erythraeum (strain IMS101)).